A 738-amino-acid chain; its full sequence is AP-4 complex subunit beta-1 (738 aa).

The segment at 534-600 (CSPKSDPSLG…NASFATSGHL (67 aa)) is hinge. An ear; mediates interaction with TEPSIN region spans residues 601 to 738 (ISEENKEGAQ…VIGTVGDIKS (138 aa)).

Belongs to the adaptor complexes large subunit family. Adaptor protein complex 4 (AP-4) is a heterotetramer composed of two large adaptins (epsilon-type subunit AP4E1 and beta-type subunit AP4B1), a medium adaptin (mu-type subunit AP4M1) and a small adaptin (sigma-type AP4S1). Interacts with TEPSIN; this interaction requires the presence of a functional AP-4 complex. Interacts with GRIA2; probably indirect it mediates the somatodendritic localization of GRIA2 in neurons.

The protein localises to the golgi apparatus. The protein resides in the trans-Golgi network membrane. Its function is as follows. Component of the adaptor protein complex 4 (AP-4). Adaptor protein complexes are vesicle coat components involved both in vesicle formation and cargo selection. They control the vesicular transport of proteins in different trafficking pathways. AP-4 forms a non clathrin-associated coat on vesicles departing the trans-Golgi network (TGN) and may be involved in the targeting of proteins from the trans-Golgi network (TGN) to the endosomal-lysosomal system. It is also involved in protein sorting to the basolateral membrane in epithelial cells and the proper asymmetric localization of somatodendritic proteins in neurons. AP-4 is involved in the recognition and binding of tyrosine-based sorting signals found in the cytoplasmic part of cargos, but may also recognize other types of sorting signal. This chain is AP-4 complex subunit beta-1, found in Mus musculus (Mouse).